Here is a 349-residue protein sequence, read N- to C-terminus: Probable G-protein coupled receptor 21 (349 aa).

Over 1-32 the chain is Extracellular; it reads MNSTWDGNQSSHPFCLLALGYLETVRFCLLEV. N-linked (GlcNAc...) asparagine glycosylation is found at asparagine 2 and asparagine 8. A helical membrane pass occupies residues 33 to 53; it reads LIIVFLTVLIISGNIIVIFVF. The Cytoplasmic portion of the chain corresponds to 54-75; it reads HCAPLLNHHSTSYFIQTMAYAD. The helical transmembrane segment at 76-96 threads the bilayer; it reads LLVGVSCLVPSLSLLYYPLPI. Residues 97–104 are Extracellular-facing; the sequence is EEAMTCQV. The chain crosses the membrane as a helical span at residues 105-125; it reads FGFVVSVLKSISMASLACISI. The Cytoplasmic portion of the chain corresponds to 126 to 147; sequence DRYIAITKPLTYNTLVTPWRLR. Residues 148-168 traverse the membrane as a helical segment; sequence LCIFLIWLYSTLVFLPSFFHW. At 169–191 the chain is on the extracellular side; that stretch reads GKPGYHGDVFQWCAESWHTNSYF. The chain crosses the membrane as a helical span at residues 192 to 212; the sequence is TLFIVMMLYAPAALIVCFTYF. The Cytoplasmic portion of the chain corresponds to 213 to 252; sequence NIFRICQQHTKEISERQARFSSQNGETGEPQTCPDKRYAM. The chain crosses the membrane as a helical span at residues 253–273; the sequence is VLFRITSVFYVLWLPYIIYFL. The Extracellular segment spans residues 274-283; sequence LESSTGCSSR. A helical transmembrane segment spans residues 284-304; that stretch reads LASFLTTWLAISNSFCNCIIY. At 305–349 the chain is on the cytoplasmic side; the sequence is SLSNSVFQRGLKGLSGSLCTSCASHTTAKDPYTVRCKGPPNGSHI.

The protein belongs to the G-protein coupled receptor 1 family.

Its subcellular location is the cell membrane. Orphan receptor. This is Probable G-protein coupled receptor 21 (Gpr21) from Mus musculus (Mouse).